Reading from the N-terminus, the 247-residue chain is Auxin-responsive protein IAA13 (247 aa).

An EAR-like (transcriptional repression) motif is present at residues 14-18 (LELGL). Positions 25-40 (GTAAKIGKSGGGGAWG) are enriched in gly residues. Disordered regions lie at residues 25–44 (GTAA…ERGR) and 49–119 (KDFP…PKDV). A compositionally biased stretch (low complexity) spans 62–75 (SASHAGSSPPRSSS). Positions 87 to 98 (RMNSLVNNQATK) are enriched in polar residues. A compositionally biased stretch (basic and acidic residues) spans 106 to 119 (AGKKKVKDDEPKDV). The PB1 domain maps to 129-225 (VGFIKVNMDG…SVKRLRVMKT (97 aa)).

Belongs to the Aux/IAA family. In terms of assembly, homodimers and heterodimers. Interacts with TPL. Preferentially expressed in stems.

It localises to the nucleus. Its function is as follows. Aux/IAA proteins are short-lived transcriptional factors that function as repressors of early auxin response genes at low auxin concentrations. Repression is thought to result from the interaction with auxin response factors (ARFs), proteins that bind to the auxin-responsive promoter element (AuxRE). Formation of heterodimers with ARF proteins may alter their ability to modulate early auxin response genes expression. The sequence is that of Auxin-responsive protein IAA13 (IAA13) from Arabidopsis thaliana (Mouse-ear cress).